We begin with the raw amino-acid sequence, 842 residues long: Elongation factor G, mitochondrial (842 aa).

The N-terminal 58 residues, 1–58 (MVAIPRVAAARSLARQLARQSLRTTSFASAPVRIAIASTPLARSPSSFRSLSSSTRRS), are a transit peptide targeting the mitochondrion. Residues 93–398 (VRQRNVGISA…GVCSYLPNPA (306 aa)) enclose the tr-type G domain. GTP is bound by residues 102 to 109 (AHIDSGKT), 196 to 200 (DTPGH), and 250 to 253 (NKMD). The tract at residues 423-442 (AGEDQEAAAEARKNAAPPVL) is disordered.

It belongs to the TRAFAC class translation factor GTPase superfamily. Classic translation factor GTPase family. EF-G/EF-2 subfamily.

The protein localises to the mitochondrion. The protein operates within protein biosynthesis; polypeptide chain elongation. Its function is as follows. Mitochondrial GTPase that catalyzes the GTP-dependent ribosomal translocation step during translation elongation. During this step, the ribosome changes from the pre-translocational (PRE) to the post-translocational (POST) state as the newly formed A-site-bound peptidyl-tRNA and P-site-bound deacylated tRNA move to the P and E sites, respectively. Catalyzes the coordinated movement of the two tRNA molecules, the mRNA and conformational changes in the ribosome. The chain is Elongation factor G, mitochondrial from Mycosarcoma maydis (Corn smut fungus).